Consider the following 188-residue polypeptide: MKLVPVALLYLGSLAFLGADTARLDVASEFRKKWNKWAVSRGKRELRVSSSYPTGLAEVKAGPAQTLIRTQDVKGASRNPQTSGPDAARIRVKRYRQSMNNFQGPRSFGCRFGTCTVQKLAHQIYQFTDNDKDGVAPRSKISPQGYGRRRRRSLPEPGLRRTLLFPEPRPGGAPAPRAHQVLANLLKM.

The signal sequence occupies residues M1–T21. Arginine amide is present on R41. Residues E45–V92 constitute a propeptide that is removed on maturation. C110 and C115 are oxidised to a cystine. Positions D131–P176 are disordered. Y146 is subject to Tyrosine amide. Residues S153–M188 constitute a propeptide, preproAM C-terminal fragment.

It belongs to the adrenomedullin family.

It is found in the secreted. Its function is as follows. Adrenomedullin/ADM and proadrenomedullin N-20 terminal peptide/PAMP are peptide hormones that act as potent hypotensive and vasodilatator agents. Numerous actions have been reported most related to the physiologic control of fluid and electrolyte homeostasis. Functionally, ADM function is mediated by the CALCRL-RAMP2 and CALCRL-RAMP3 receptor complexes with ADM showing the highest potency for the CALCRL-RAMP2 complex. In Canis lupus familiaris (Dog), this protein is Pro-adrenomedullin (ADM).